The sequence spans 670 residues: Probable ATP-citrate synthase subunit 1 (670 aa).

The segment at 1-22 (MPSATTASTNGANGASASPAPG) is disordered. ATP is bound by residues 257 to 277 (LLRY…EVGG) and 308 to 334 (FKTE…KNKS). A Mg(2+)-binding site is contributed by Glu274. His316 acts as the Tele-phosphohistidine intermediate in catalysis. 335–345 (MREAGFYVPDT) serves as a coordination point for CoA.

This sequence belongs to the succinate/malate CoA ligase alpha subunit family. Composed of two subunits.

Its subcellular location is the cytoplasm. The enzyme catalyses oxaloacetate + acetyl-CoA + ADP + phosphate = citrate + ATP + CoA. Its function is as follows. Catalyzes the formation of cytosolic acetyl-CoA, which is mainly used for the biosynthesis of fatty acids and sterols. The chain is Probable ATP-citrate synthase subunit 1 from Neurospora crassa (strain ATCC 24698 / 74-OR23-1A / CBS 708.71 / DSM 1257 / FGSC 987).